The chain runs to 697 residues: Disintegrin and metalloproteinase domain-containing protein 26A (697 aa).

The first 22 residues, 1–22 (MFLKFCLWTMFFFSAWSPIGHA), serve as a signal peptide directing secretion. Residues 23–187 (KYSSLLEVVT…NAPTLLQIPY (165 aa)) constitute a propeptide that is removed on maturation. Residue N127 is glycosylated (N-linked (GlcNAc...) asparagine). Residues 159–166 (MRCGLSEE) carry the Cysteine switch motif. C161 provides a ligand contact to Zn(2+). The Extracellular portion of the chain corresponds to 188 to 671 (ENWWTHHRFI…PPLPLSHSKW (484 aa)). The 191-residue stretch at 195-385 (RFIEYFVVLD…TKRSCLYDIP (191 aa)) folds into the Peptidase M12B domain. The N-linked (GlcNAc...) asparagine glycan is linked to N214. Cystine bridges form between C305/C380, C344/C366, and C346/C351. Residue H329 participates in Zn(2+) binding. E330 is a catalytic residue. The Zn(2+) site is built by H333 and H339. N-linked (GlcNAc...) asparagine glycans are attached at residues N365, N391, N464, N506, N531, and N573. The 87-residue stretch at 392–478 (LTVCGNKVVE…ECPGDVYKAD (87 aa)) folds into the Disintegrin domain. Residues C450 and C470 are joined by a disulfide bond. The EGF-like domain occupies 616–649 (LVSNCSPQLYHMQGICNNKQHCHCGVTWKPPDCQ). Intrachain disulfides connect C620–C631 and C639–C648. Residues 672–692 (IVYILIVLDVCIVIIIYLFSF) traverse the membrane as a helical segment. Topologically, residues 693–697 (YKLSK) are cytoplasmic.

Requires Zn(2+) as cofactor. Expressed in sperm (at protein level). Expressed specifically in testis.

It is found in the membrane. In terms of biological role, sperm surface membrane protein that may be involved in spermatogenesis and fertilization. This is Disintegrin and metalloproteinase domain-containing protein 26A from Mus musculus (Mouse).